The chain runs to 270 residues: MDYYFTKGKPQLVNMKTPVYLVTQFQQLMDLMQNQYQVSCLELMQRSGKAACDFLVYRWPKVKKISIFCGRGDNGGQGYVLAQQAKKMGMIPTVWQVGHQMSMSKPPQMHEEVWYEMNSCHQQGILLHTYSPDIDLGDPELIVDALFGVGLYGHVRPEIASLLQRLQQFTVPILAIEVPTGINASTGEIAGNALAATATITFLCMKLGLLINDGKIYSGEIAFDDLLAPEAIYQQVKGIEKSSLLDSSTCFSKKIWYRNKTQKGWQLSIN.

Residues 25 to 234 (FQQLMDLMQN…DLLAPEAIYQ (210 aa)) enclose the YjeF N-terminal domain. Residue 73–77 (DNGGQ) participates in (6S)-NADPHX binding. Asparagine 74 and aspartate 144 together coordinate K(+). (6S)-NADPHX contacts are provided by residues 148-154 (GVGLYGH) and glutamate 177. Threonine 180 contacts K(+).

Belongs to the NnrE/AIBP family. K(+) is required as a cofactor.

The catalysed reaction is (6R)-NADHX = (6S)-NADHX. It catalyses the reaction (6R)-NADPHX = (6S)-NADPHX. Functionally, catalyzes the epimerization of the S- and R-forms of NAD(P)HX, a damaged form of NAD(P)H that is a result of enzymatic or heat-dependent hydration. This is a prerequisite for the S-specific NAD(P)H-hydrate dehydratase to allow the repair of both epimers of NAD(P)HX. In Legionella pneumophila subsp. pneumophila (strain Philadelphia 1 / ATCC 33152 / DSM 7513), this protein is NAD(P)H-hydrate epimerase.